The sequence spans 481 residues: Glycogen synthase (481 aa).

Lysine 16 is a binding site for ADP-alpha-D-glucose.

The protein belongs to the glycosyltransferase 1 family. Bacterial/plant glycogen synthase subfamily.

It carries out the reaction [(1-&gt;4)-alpha-D-glucosyl](n) + ADP-alpha-D-glucose = [(1-&gt;4)-alpha-D-glucosyl](n+1) + ADP + H(+). It functions in the pathway glycan biosynthesis; glycogen biosynthesis. Functionally, synthesizes alpha-1,4-glucan chains using ADP-glucose. This is Glycogen synthase from Lacticaseibacillus casei (strain BL23) (Lactobacillus casei).